Here is a 233-residue protein sequence, read N- to C-terminus: Pirin-like protein YhaK (233 aa).

It belongs to the pirin family. As to quaternary structure, monomer.

Its subcellular location is the cytoplasm. Functionally, does not have quercetin 2,3-dioxygenase activity. The polypeptide is Pirin-like protein YhaK (yhaK) (Escherichia coli (strain K12)).